The sequence spans 1193 residues: DNA-directed RNA polymerase subunit beta (1193 aa).

Positions 1173–1193 (QQAKEAAELEKAKEEALDKTE) are disordered. The span at 1177 to 1193 (EAAELEKAKEEALDKTE) shows a compositional bias: basic and acidic residues.

It belongs to the RNA polymerase beta chain family. In terms of assembly, the RNAP catalytic core consists of 2 alpha, 1 beta, 1 beta' and 1 omega subunit. When a sigma factor is associated with the core the holoenzyme is formed, which can initiate transcription.

It catalyses the reaction RNA(n) + a ribonucleoside 5'-triphosphate = RNA(n+1) + diphosphate. Its function is as follows. DNA-dependent RNA polymerase catalyzes the transcription of DNA into RNA using the four ribonucleoside triphosphates as substrates. This chain is DNA-directed RNA polymerase subunit beta, found in Streptococcus thermophilus (strain CNRZ 1066).